The following is a 142-amino-acid chain: Acidic phospholipase A2 PA4 (142 aa).

Ca(2+) contacts are provided by Trp-10, Gly-12, and Gly-14. Disulfide bonds link Cys-11/Cys-33, Cys-32/Cys-72, and Cys-39/Cys-65. Residue His-36 is part of the active site. Asp-37 is a binding site for Ca(2+).

The protein belongs to the phospholipase A2 family. Group III subfamily. Requires Ca(2+) as cofactor. As to expression, expressed by the venom gland.

The protein resides in the secreted. It catalyses the reaction a 1,2-diacyl-sn-glycero-3-phosphocholine + H2O = a 1-acyl-sn-glycero-3-phosphocholine + a fatty acid + H(+). In terms of biological role, PLA2 catalyzes the calcium-dependent hydrolysis of the 2-acyl groups in 3-sn-phosphoglycerides. In Heloderma suspectum (Gila monster), this protein is Acidic phospholipase A2 PA4.